Reading from the N-terminus, the 1187-residue chain is uncharacterized protein (1187 aa).

Disordered regions lie at residues 302 to 405 (QKSQ…KPVG), 419 to 451 (QAFS…RASK), 511 to 551 (KAPG…LRLE), 1095 to 1134 (KSQR…KLPD), and 1148 to 1187 (PHLP…PASL). Residues 321 to 333 (LPLSGPAGAPPLG) are compositionally biased toward low complexity. A compositionally biased stretch (basic residues) spans 352–361 (SRRKARHKAS). Low complexity-rich tracts occupy residues 422–435 (SPLL…SPAA) and 517–534 (GTTL…GEPP). Over residues 1096–1107 (SQRTPQGEQSRN) the composition is skewed to polar residues. Positions 1160-1174 (TGGSFSSEGTGSQTS) are enriched in low complexity.

This is an uncharacterized protein from Mus musculus (Mouse).